The sequence spans 89 residues: DNA-directed RNA polymerase subunit omega (89 aa).

It belongs to the RNA polymerase subunit omega family. In terms of assembly, the RNAP catalytic core consists of 2 alpha, 1 beta, 1 beta' and 1 omega subunit. When a sigma factor is associated with the core the holoenzyme is formed, which can initiate transcription.

It carries out the reaction RNA(n) + a ribonucleoside 5'-triphosphate = RNA(n+1) + diphosphate. Promotes RNA polymerase assembly. Latches the N- and C-terminal regions of the beta' subunit thereby facilitating its interaction with the beta and alpha subunits. The chain is DNA-directed RNA polymerase subunit omega (rpoZ) from Pasteurella multocida (strain Pm70).